We begin with the raw amino-acid sequence, 565 residues long: Probable serine/threonine-protein kinase abkA (565 aa).

Residues 44 to 77 (NNNNISLKDKFKDLKDLKDNLNEKKINNDNDDDD) adopt a coiled-coil conformation. In terms of domain architecture, Protein kinase spans 231-565 (LFQDDPIAAA…FKNIFYKNYK (335 aa)). Residues 237–245 (IAAASIGQV) and Lys-259 each bind ATP. The active-site Proton acceptor is the Asp-401.

Belongs to the protein kinase superfamily. ADCK protein kinase family.

The chain is Probable serine/threonine-protein kinase abkA (abkA) from Dictyostelium discoideum (Social amoeba).